The following is a 292-amino-acid chain: 33 kDa chaperonin (292 aa).

2 disulfides stabilise this stretch: Cys-230/Cys-232 and Cys-263/Cys-266.

The protein belongs to the HSP33 family. Under oxidizing conditions two disulfide bonds are formed involving the reactive cysteines. Under reducing conditions zinc is bound to the reactive cysteines and the protein is inactive.

Its subcellular location is the cytoplasm. In terms of biological role, redox regulated molecular chaperone. Protects both thermally unfolding and oxidatively damaged proteins from irreversible aggregation. Plays an important role in the bacterial defense system toward oxidative stress. In Salmonella typhi, this protein is 33 kDa chaperonin.